Reading from the N-terminus, the 241-residue chain is MSLTLLPAVDVRDGKAVRLRQGESGSETDYGSPLEAARTWVESGAEWIHLVDLDAAFGTGNNRDQLRAIVKELGDKVNIEMSGGVRDDASLDAALEAGAARVNIGTAALENPDWTASVIKKYGDRVAVGLDVRGHTLAARGWVKEGGDLFETMKFLDSVGCSRYVVTDVARDGMMSGPNIELLREVASRTDAKVTASGGISKLDDLRNIKELAELGVDAAILGKSLYARAFTLEEALEVAR.

The Proton acceptor role is filled by Asp10. Catalysis depends on Asp131, which acts as the Proton donor.

The protein belongs to the HisA/HisF family.

The protein localises to the cytoplasm. The enzyme catalyses 1-(5-phospho-beta-D-ribosyl)-5-[(5-phospho-beta-D-ribosylamino)methylideneamino]imidazole-4-carboxamide = 5-[(5-phospho-1-deoxy-D-ribulos-1-ylimino)methylamino]-1-(5-phospho-beta-D-ribosyl)imidazole-4-carboxamide. The protein operates within amino-acid biosynthesis; L-histidine biosynthesis; L-histidine from 5-phospho-alpha-D-ribose 1-diphosphate: step 4/9. The protein is 1-(5-phosphoribosyl)-5-[(5-phosphoribosylamino)methylideneamino] imidazole-4-carboxamide isomerase of Bifidobacterium adolescentis (strain ATCC 15703 / DSM 20083 / NCTC 11814 / E194a).